Consider the following 105-residue polypeptide: Multidrug resistance protein EbrA (105 aa).

4 helical membrane passes run 2-22 (LIGY…AAML), 35-55 (ALVV…LNHI), 57-77 (LSLS…VIGV), and 84-104 (LNAK…LLNW).

It belongs to the drug/metabolite transporter (DMT) superfamily. Small multidrug resistance (SMR) (TC 2.A.7.1) family. EbrA/EbrB subfamily. In terms of assembly, the efflux pump is composed of EbrA and EbrB.

The protein resides in the cell membrane. Functionally, part of a multidrug efflux pump. Confers resistance to cationic lipophilic dyes such as ethidium bromide, acriflavine, pyronine Y and safranin O. The efflux is probably coupled to an influx of protons. The chain is Multidrug resistance protein EbrA (ebrA) from Bacillus subtilis (strain 168).